The sequence spans 340 residues: MKRDDLVSPECMDGDNVYETTLRPHSIKEYVGQKKIKKTLPIFVEAAQKRKEALDHVLLYGPPGLGKTTLALIIAREMGFNIKVTSGPVIERPGDLAAILTNLKDYDILFIDEIHRLPHSVEEILYPAMEDFYIDIVIGQGPSARSMKLDIPKFTLVGATTRAGLLTSPLRDRFGISFRLDYYAVEELTKIINRSASIMSIEIEHSGALEIAKRSRGTPRIANRLLKRVRDYAQVKGEGIIKRAVAVHALEMLEIDDRGFDQMDRSILLSIIENYGGGPVGIDTLCATVGEEKTTIEDVYEPYLIKEGYLQKTARGRIATKKAYEHFGKRKFEVGQKELF.

Residues 1–183 (MKRDDLVSPE…FGISFRLDYY (183 aa)) are large ATPase domain (RuvB-L). Residues L22, R23, G64, K67, T68, T69, 130–132 (EDF), R173, Y183, and R220 each bind ATP. T68 contributes to the Mg(2+) binding site. Residues 184 to 254 (AVEELTKIIN…VAVHALEMLE (71 aa)) are small ATPAse domain (RuvB-S). The tract at residues 257-340 (DRGFDQMDRS…KFEVGQKELF (84 aa)) is head domain (RuvB-H). Residues K312 and R317 each contribute to the DNA site.

It belongs to the RuvB family. Homohexamer. Forms an RuvA(8)-RuvB(12)-Holliday junction (HJ) complex. HJ DNA is sandwiched between 2 RuvA tetramers; dsDNA enters through RuvA and exits via RuvB. An RuvB hexamer assembles on each DNA strand where it exits the tetramer. Each RuvB hexamer is contacted by two RuvA subunits (via domain III) on 2 adjacent RuvB subunits; this complex drives branch migration. In the full resolvosome a probable DNA-RuvA(4)-RuvB(12)-RuvC(2) complex forms which resolves the HJ.

It is found in the cytoplasm. The catalysed reaction is ATP + H2O = ADP + phosphate + H(+). Its function is as follows. The RuvA-RuvB-RuvC complex processes Holliday junction (HJ) DNA during genetic recombination and DNA repair, while the RuvA-RuvB complex plays an important role in the rescue of blocked DNA replication forks via replication fork reversal (RFR). RuvA specifically binds to HJ cruciform DNA, conferring on it an open structure. The RuvB hexamer acts as an ATP-dependent pump, pulling dsDNA into and through the RuvAB complex. RuvB forms 2 homohexamers on either side of HJ DNA bound by 1 or 2 RuvA tetramers; 4 subunits per hexamer contact DNA at a time. Coordinated motions by a converter formed by DNA-disengaged RuvB subunits stimulates ATP hydrolysis and nucleotide exchange. Immobilization of the converter enables RuvB to convert the ATP-contained energy into a lever motion, pulling 2 nucleotides of DNA out of the RuvA tetramer per ATP hydrolyzed, thus driving DNA branch migration. The RuvB motors rotate together with the DNA substrate, which together with the progressing nucleotide cycle form the mechanistic basis for DNA recombination by continuous HJ branch migration. Branch migration allows RuvC to scan DNA until it finds its consensus sequence, where it cleaves and resolves cruciform DNA. The chain is Holliday junction branch migration complex subunit RuvB from Syntrophus aciditrophicus (strain SB).